The sequence spans 483 residues: Regulatory protein ViaA (483 aa).

It belongs to the ViaA family. In terms of assembly, homodimer. Interacts with RavA.

It is found in the cytoplasm. Functionally, component of the RavA-ViaA chaperone complex, which may act on the membrane to optimize the function of some of the respiratory chains. ViaA stimulates the ATPase activity of RavA. The polypeptide is Regulatory protein ViaA (Escherichia coli O127:H6 (strain E2348/69 / EPEC)).